Here is a 515-residue protein sequence, read N- to C-terminus: 2,3-bisphosphoglycerate-independent phosphoglycerate mutase (515 aa).

Residues D14 and S64 each coordinate Mn(2+). S64 (phosphoserine intermediate) is an active-site residue. Residues H125, 155–156 (RD), R187, R193, 263–266 (RADR), and K337 contribute to the substrate site. Residues D404, H408, D445, H446, and H464 each contribute to the Mn(2+) site.

It belongs to the BPG-independent phosphoglycerate mutase family. As to quaternary structure, monomer. Mn(2+) is required as a cofactor.

The enzyme catalyses (2R)-2-phosphoglycerate = (2R)-3-phosphoglycerate. The protein operates within carbohydrate degradation; glycolysis; pyruvate from D-glyceraldehyde 3-phosphate: step 3/5. In terms of biological role, catalyzes the interconversion of 2-phosphoglycerate and 3-phosphoglycerate. The protein is 2,3-bisphosphoglycerate-independent phosphoglycerate mutase of Pseudomonas paraeruginosa (strain DSM 24068 / PA7) (Pseudomonas aeruginosa (strain PA7)).